A 109-amino-acid polypeptide reads, in one-letter code: UPF0060 membrane protein PA3275 (109 aa).

Helical transmembrane passes span 5–25 (FWFVLAAFCEIAGCYAFYLWL), 27–47 (LGKSALWVLPGLLSLTLFALL), 59–79 (AYAAYGGIYVAASLFWLAFVE), and 84–104 (LWSDWLGVALCVVGASVVLFG).

This sequence belongs to the UPF0060 family.

The protein resides in the cell inner membrane. The protein is UPF0060 membrane protein PA3275 of Pseudomonas aeruginosa (strain ATCC 15692 / DSM 22644 / CIP 104116 / JCM 14847 / LMG 12228 / 1C / PRS 101 / PAO1).